Consider the following 305-residue polypeptide: Ribonuclease BN (305 aa).

Positions 64, 66, 68, 69, 141, 212, and 270 each coordinate Zn(2+). The active-site Proton acceptor is Asp68.

This sequence belongs to the RNase Z family. RNase BN subfamily. Homodimer. Requires Zn(2+) as cofactor.

In terms of biological role, zinc phosphodiesterase, which has both exoribonuclease and endoribonuclease activities. The sequence is that of Ribonuclease BN from Escherichia coli O157:H7.